We begin with the raw amino-acid sequence, 343 residues long: MTDPIPLHTPDRQPEDPDVALRPKSLAEFVGQAAAKDNLAVFIEAARSRGEAMDHTLFFGPPGLGKTTLAQIIARELGVGFRATSGPVIAKAGDLAALLTNLEPHDVLFIDEIHRLNPVVEEVLYPAMEDRALDLIIGEGPAARSVRIDLPPFTLIGATTRQGLLTTPLRDRFGIPVRLNFYTEEELEKVVTRGAGLMGLAIDAAGAREIARRSRGTPRVAGRLLRRVRDFAEVQKAGTVTSPIADAALTRLEVDGLGLDAMDRRYLTMIADIYKGGPVGVETLAAGLAEPRDTIEDVVEPYLIQLGLVARTARGRCLNDRGWEHLERQPPAGSQTGLFDGKS.

Residues 1–182 form a large ATPase domain (RuvB-L) region; that stretch reads MTDPIPLHTP…FGIPVRLNFY (182 aa). ATP is bound by residues Leu-21, Arg-22, Gly-63, Lys-66, Thr-67, Thr-68, Arg-172, Tyr-182, and Arg-219. Thr-67 provides a ligand contact to Mg(2+). Residues 183–253 form a small ATPAse domain (RuvB-S) region; sequence TEEELEKVVT…IADAALTRLE (71 aa). Residues 256–343 are head domain (RuvB-H); the sequence is GLGLDAMDRR…SQTGLFDGKS (88 aa). Positions 292, 311, and 316 each coordinate DNA.

This sequence belongs to the RuvB family. Homohexamer. Forms an RuvA(8)-RuvB(12)-Holliday junction (HJ) complex. HJ DNA is sandwiched between 2 RuvA tetramers; dsDNA enters through RuvA and exits via RuvB. An RuvB hexamer assembles on each DNA strand where it exits the tetramer. Each RuvB hexamer is contacted by two RuvA subunits (via domain III) on 2 adjacent RuvB subunits; this complex drives branch migration. In the full resolvosome a probable DNA-RuvA(4)-RuvB(12)-RuvC(2) complex forms which resolves the HJ.

It localises to the cytoplasm. The enzyme catalyses ATP + H2O = ADP + phosphate + H(+). The RuvA-RuvB-RuvC complex processes Holliday junction (HJ) DNA during genetic recombination and DNA repair, while the RuvA-RuvB complex plays an important role in the rescue of blocked DNA replication forks via replication fork reversal (RFR). RuvA specifically binds to HJ cruciform DNA, conferring on it an open structure. The RuvB hexamer acts as an ATP-dependent pump, pulling dsDNA into and through the RuvAB complex. RuvB forms 2 homohexamers on either side of HJ DNA bound by 1 or 2 RuvA tetramers; 4 subunits per hexamer contact DNA at a time. Coordinated motions by a converter formed by DNA-disengaged RuvB subunits stimulates ATP hydrolysis and nucleotide exchange. Immobilization of the converter enables RuvB to convert the ATP-contained energy into a lever motion, pulling 2 nucleotides of DNA out of the RuvA tetramer per ATP hydrolyzed, thus driving DNA branch migration. The RuvB motors rotate together with the DNA substrate, which together with the progressing nucleotide cycle form the mechanistic basis for DNA recombination by continuous HJ branch migration. Branch migration allows RuvC to scan DNA until it finds its consensus sequence, where it cleaves and resolves cruciform DNA. This Erythrobacter litoralis (strain HTCC2594) protein is Holliday junction branch migration complex subunit RuvB.